A 342-amino-acid polypeptide reads, in one-letter code: Cell division protein ZipA (342 aa).

Residues M1–L6 are Periplasmic-facing. Residues V7–I27 form a helical membrane-spanning segment. Residues R28 to A342 are Cytoplasmic-facing. Residues K33–V57 form a disordered region. A compositionally biased stretch (basic and acidic residues) spans Q47–V57.

Belongs to the ZipA family. Interacts with FtsZ via their C-terminal domains.

The protein localises to the cell inner membrane. Functionally, essential cell division protein that stabilizes the FtsZ protofilaments by cross-linking them and that serves as a cytoplasmic membrane anchor for the Z ring. Also required for the recruitment to the septal ring of downstream cell division proteins. The protein is Cell division protein ZipA of Shewanella putrefaciens (strain CN-32 / ATCC BAA-453).